A 190-amino-acid polypeptide reads, in one-letter code: Biphenyl-2,3-diol 1,2-dioxygenase 3 (190 aa).

The 120-residue stretch at 6–125 (RLAHFVLQTN…DGNMVELQID (120 aa)) folds into the VOC domain. Fe cation is bound by residues histidine 9, histidine 73, and glutamate 121.

The protein belongs to the extradiol ring-cleavage dioxygenase family. Homohexamer. Fe(2+) is required as a cofactor.

It catalyses the reaction biphenyl-2,3-diol + O2 = 2-hydroxy-6-oxo-6-phenylhexa-2,4-dienoate + H(+). It functions in the pathway xenobiotic degradation; biphenyl degradation; 2-hydroxy-2,4-pentadienoate and benzoate from biphenyl: step 3/4. The sequence is that of Biphenyl-2,3-diol 1,2-dioxygenase 3 (bphC3) from Rhodococcus globerulus.